Consider the following 210-residue polypeptide: Imidazoleglycerol-phosphate dehydratase (210 aa).

It belongs to the imidazoleglycerol-phosphate dehydratase family.

Its subcellular location is the cytoplasm. The enzyme catalyses D-erythro-1-(imidazol-4-yl)glycerol 3-phosphate = 3-(imidazol-4-yl)-2-oxopropyl phosphate + H2O. It participates in amino-acid biosynthesis; L-histidine biosynthesis; L-histidine from 5-phospho-alpha-D-ribose 1-diphosphate: step 6/9. The sequence is that of Imidazoleglycerol-phosphate dehydratase from Mycobacterium bovis (strain ATCC BAA-935 / AF2122/97).